A 60-amino-acid polypeptide reads, in one-letter code: Putative transcriptional regulator XtpA (60 aa).

Functionally, controls the expression of small non-coding RNA GcvB, which represses the expression of many amino acid transporter proteins and uptake of aminoglycoside antibiotics in cells. Might be a transcriptional activator. An RNA (xtr) with a tRNA-like fold possibly derived from tRNA-Arg(UCG) is encoded entirely within the protein; xtr does not have the sequence corresponding to tRNA anticodon or variable arms. 10 synonymous codon changes in the xtr region of xtpA have the same phenotype as a deletion mutation, suggesting the mRNA secondary structure is important for function. This is Putative transcriptional regulator XtpA from Escherichia coli (strain K12).